The following is a 140-amino-acid chain: Nucleoside diphosphate kinase (140 aa).

Lysine 11, phenylalanine 59, arginine 87, threonine 93, arginine 104, and asparagine 114 together coordinate ATP. Histidine 117 (pros-phosphohistidine intermediate) is an active-site residue.

Belongs to the NDK family. As to quaternary structure, homotetramer. The cofactor is Mg(2+).

The protein localises to the cytoplasm. The enzyme catalyses a 2'-deoxyribonucleoside 5'-diphosphate + ATP = a 2'-deoxyribonucleoside 5'-triphosphate + ADP. The catalysed reaction is a ribonucleoside 5'-diphosphate + ATP = a ribonucleoside 5'-triphosphate + ADP. In terms of biological role, major role in the synthesis of nucleoside triphosphates other than ATP. The ATP gamma phosphate is transferred to the NDP beta phosphate via a ping-pong mechanism, using a phosphorylated active-site intermediate. The chain is Nucleoside diphosphate kinase from Sinorhizobium medicae (strain WSM419) (Ensifer medicae).